The following is a 393-amino-acid chain: Elongation factor Tu (393 aa).

One can recognise a tr-type G domain in the interval 10–203 (KPHVNIGTIG…AVDSFIPDPV (194 aa)). The interval 19–26 (GHVDHGKT) is G1. 19–26 (GHVDHGKT) contacts GTP. Thr26 contacts Mg(2+). The tract at residues 60 to 64 (GITIS) is G2. The tract at residues 81–84 (DCPG) is G3. Residues 81 to 85 (DCPGH) and 136 to 139 (NKVD) contribute to the GTP site. Positions 136–139 (NKVD) are G4. The interval 173-175 (SAL) is G5.

Belongs to the TRAFAC class translation factor GTPase superfamily. Classic translation factor GTPase family. EF-Tu/EF-1A subfamily. Monomer.

It localises to the cytoplasm. It catalyses the reaction GTP + H2O = GDP + phosphate + H(+). In terms of biological role, GTP hydrolase that promotes the GTP-dependent binding of aminoacyl-tRNA to the A-site of ribosomes during protein biosynthesis. The protein is Elongation factor Tu of Pelodictyon phaeoclathratiforme (strain DSM 5477 / BU-1).